We begin with the raw amino-acid sequence, 294 residues long: Small ribosomal subunit protein uS2 (294 aa).

Residues 256–274 (SGKFIMDEDPDSKKTKTAE) are compositionally biased toward basic and acidic residues. Positions 256-294 (SGKFIMDEDPDSKKTKTAEEPSATIEPSTTTTVEVDQNE) are disordered. The span at 280-294 (IEPSTTTTVEVDQNE) shows a compositional bias: polar residues.

Belongs to the universal ribosomal protein uS2 family.

This chain is Small ribosomal subunit protein uS2, found in Leptospira interrogans serogroup Icterohaemorrhagiae serovar Lai (strain 56601).